The chain runs to 172 residues: C-phycocyanin-2 beta subunit (172 aa).

Asn72 carries the N4-methylasparagine modification. The (2R,3E)-phycocyanobilin site is built by Cys82 and Cys153.

Belongs to the phycobiliprotein family. Heterodimer of an alpha and a beta subunit, which further assembles into trimers and the trimers into hexamers. In terms of processing, contains two covalently linked bilin chromophores.

The protein resides in the cellular thylakoid membrane. Functionally, light-harvesting photosynthetic bile pigment-protein from the phycobiliprotein complex (phycobilisome, PBS). Phycocyanin is the major phycobiliprotein in the PBS rod. The protein is C-phycocyanin-2 beta subunit (cpcB2) of Pseudanabaena tenuis (strain PCC 7409).